The following is a 291-amino-acid chain: Transcription factor bHLH53 (291 aa).

The bHLH domain maps to 163–212 (PTLSSQSIAARGRRRRIAEKTHELGKLIPGGNKLNTAEMFQAAAKYVKFL).

In terms of assembly, homodimer. In terms of tissue distribution, expressed constitutively in roots, leaves, stems, and flowers.

Its subcellular location is the nucleus. The chain is Transcription factor bHLH53 (BHLH53) from Arabidopsis thaliana (Mouse-ear cress).